The sequence spans 843 residues: Protein P (843 aa).

Positions 1 to 177 (MPLSYQHFRK…FCGSPYSWEQ (177 aa)) are terminal protein domain (TP). Positions 178 to 346 (DLQHGRLVFQ…YCLCHIVNLI (169 aa)) are spacer. Residues 220–265 (QSRLGPQPAQGQLAGRQQGGSGSIRARVHPSPWGTVGVEPSGSGPT) form a disordered region. The span at 223–235 (LGPQPAQGQLAGR) shows a compositional bias: low complexity. Residues 347 to 690 (EDWGPCTEHG…YLNLYPVARQ (344 aa)) form a polymerase/reverse transcriptase domain (RT) region. The Reverse transcriptase domain occupies 357–600 (EHLIRTPRTP…YSLNFMGYVI (244 aa)). Residues Asp429, Asp551, and Asp552 each contribute to the Mg(2+) site.

The protein belongs to the hepadnaviridae P protein family.

It catalyses the reaction DNA(n) + a 2'-deoxyribonucleoside 5'-triphosphate = DNA(n+1) + diphosphate. It carries out the reaction Endonucleolytic cleavage to 5'-phosphomonoester.. Its activity is regulated as follows. Activated by host HSP70 and HSP40 in vitro to be able to bind the epsilon loop of the pgRNA. Because deletion of the RNase H region renders the protein partly chaperone-independent, the chaperones may be needed indirectly to relieve occlusion of the RNA-binding site by this domain. Inhibited by several reverse-transcriptase inhibitors: Lamivudine, Adefovir and Entecavir. Its function is as follows. Multifunctional enzyme that converts the viral RNA genome into dsDNA in viral cytoplasmic capsids. This enzyme displays a DNA polymerase activity that can copy either DNA or RNA templates, and a ribonuclease H (RNase H) activity that cleaves the RNA strand of RNA-DNA heteroduplexes in a partially processive 3'- to 5'-endonucleasic mode. Neo-synthesized pregenomic RNA (pgRNA) are encapsidated together with the P protein, and reverse-transcribed inside the nucleocapsid. Initiation of reverse-transcription occurs first by binding the epsilon loop on the pgRNA genome, and is initiated by protein priming, thereby the 5'-end of (-)DNA is covalently linked to P protein. Partial (+)DNA is synthesized from the (-)DNA template and generates the relaxed circular DNA (RC-DNA) genome. After budding and infection, the RC-DNA migrates in the nucleus, and is converted into a plasmid-like covalently closed circular DNA (cccDNA). The activity of P protein does not seem to be necessary for cccDNA generation, and is presumably released from (+)DNA by host nuclear DNA repair machinery. The polypeptide is Protein P (Hepatitis B virus genotype B2 (isolate Vietnam/9873/1997) (HBV-B)).